The following is a 556-amino-acid chain: Peptidylarginine deiminase (556 aa).

An N-terminal signal peptide occupies residues 1 to 23 (MKKLLQAKALILALGLFQLPAIA). The propeptide occupies 24–43 (QTQMQADRTNGQFATEEMQR). Cysteine 351 functions as the Amidino-cysteine intermediate in the catalytic mechanism.

It belongs to the agmatine deiminase family. The cofactor is FAD. Requires FMN as cofactor.

The protein resides in the secreted. Its activity is regulated as follows. Inhibited by cysteine and TLCK. Inhibited by high concentration of thiourea and thio-L-citrulline. Functionally, deiminates the guanidino group of C-terminal arginine residues on a variety of peptides, including the vasoregulatory peptide-hormone bradykinin, to yield ammonia and a citrulline residue. May promote the growth of the pathogen in the periodontal pocket by producing ammonia, ammonia having a protective effect during acidic cleaning cycles in the mouth. In Porphyromonas gingivalis (strain ATCC BAA-308 / W83), this protein is Peptidylarginine deiminase.